Reading from the N-terminus, the 325-residue chain is CRISPR-associated endonuclease Cas1 3 (325 aa).

Mn(2+) is bound by residues E152, H217, and E232.

This sequence belongs to the CRISPR-associated endonuclease Cas1 family. Homodimer, forms a heterotetramer with a Cas2 homodimer. The cofactor is Mg(2+). It depends on Mn(2+) as a cofactor.

In terms of biological role, CRISPR (clustered regularly interspaced short palindromic repeat), is an adaptive immune system that provides protection against mobile genetic elements (viruses, transposable elements and conjugative plasmids). CRISPR clusters contain spacers, sequences complementary to antecedent mobile elements, and target invading nucleic acids. CRISPR clusters are transcribed and processed into CRISPR RNA (crRNA). Acts as a dsDNA endonuclease. Involved in the integration of spacer DNA into the CRISPR cassette. This is CRISPR-associated endonuclease Cas1 3 from Thermodesulfovibrio yellowstonii (strain ATCC 51303 / DSM 11347 / YP87).